The following is a 476-amino-acid chain: Bifunctional protein HldE (476 aa).

The ribokinase stretch occupies residues 1 to 318 (MAQYSAEFKQ…ENAIHARPET (318 aa)). ATP is bound at residue 195–198 (NMSE). Residue aspartate 264 is part of the active site. Residues 344–476 (MTNGCFDILH…VIEKIKLLKD (133 aa)) are cytidylyltransferase.

In the N-terminal section; belongs to the carbohydrate kinase PfkB family. It in the C-terminal section; belongs to the cytidylyltransferase family. Homodimer.

The catalysed reaction is D-glycero-beta-D-manno-heptose 7-phosphate + ATP = D-glycero-beta-D-manno-heptose 1,7-bisphosphate + ADP + H(+). The enzyme catalyses D-glycero-beta-D-manno-heptose 1-phosphate + ATP + H(+) = ADP-D-glycero-beta-D-manno-heptose + diphosphate. Its pathway is nucleotide-sugar biosynthesis; ADP-L-glycero-beta-D-manno-heptose biosynthesis; ADP-L-glycero-beta-D-manno-heptose from D-glycero-beta-D-manno-heptose 7-phosphate: step 1/4. It participates in nucleotide-sugar biosynthesis; ADP-L-glycero-beta-D-manno-heptose biosynthesis; ADP-L-glycero-beta-D-manno-heptose from D-glycero-beta-D-manno-heptose 7-phosphate: step 3/4. Functionally, catalyzes the phosphorylation of D-glycero-D-manno-heptose 7-phosphate at the C-1 position to selectively form D-glycero-beta-D-manno-heptose-1,7-bisphosphate. Its function is as follows. Catalyzes the ADP transfer from ATP to D-glycero-beta-D-manno-heptose 1-phosphate, yielding ADP-D-glycero-beta-D-manno-heptose. This chain is Bifunctional protein HldE, found in Haemophilus influenzae (strain PittGG).